Consider the following 674-residue polypeptide: Fidgetin-like protein 1 (674 aa).

Positions 157-179 are disordered; it reads SQESDSLPNSAHDRDRTQDFPES. Residues 167–179 show a composition bias toward basic and acidic residues; sequence AHDRDRTQDFPES. Lys225 is covalently cross-linked (Glycyl lysine isopeptide (Lys-Gly) (interchain with G-Cter in SUMO2)). A Phosphoserine modification is found at Ser259. The tract at residues 295-344 is necessary and sufficient for interaction with RAD51; it reads FKTAKEQLWVDQQKKYHQPQRASGSSYGGVKKSLGASRSRGILGKFVPPI. Lys339 carries the post-translational modification N6-acetyllysine. ATP contacts are provided by residues Ala404 and 444–449; that span reads GTGKTL.

The protein belongs to the AAA ATPase family. In terms of assembly, hexamer. Interacts (via N-terminal one-half region) with RAD51; the interaction is direct. Interacts (via N-terminal one-half region) with SPIDR (via the C-terminal region); the interaction is direct. Interacts with FIRRM; may regulate homologous recombination. Mg(2+) serves as cofactor.

The protein resides in the nucleus. It is found in the cytoplasm. Its subcellular location is the perinuclear region. The enzyme catalyses ATP + H2O = ADP + phosphate + H(+). Functionally, involved in DNA double-strand break (DBS) repair via homologous recombination (HR). Recruited at DSB sites independently of BRCA2, RAD51 and RAD51 paralogs in a H2AX-dependent manner. May regulate osteoblast proliferation and differentiation. May play a role in the control of male meiosis dynamic. The polypeptide is Fidgetin-like protein 1 (FIGNL1) (Homo sapiens (Human)).